We begin with the raw amino-acid sequence, 200 residues long: dTTP/UTP pyrophosphatase (200 aa).

Residue Asp72 is the Proton acceptor of the active site.

Belongs to the Maf family. YhdE subfamily. A divalent metal cation serves as cofactor.

The protein resides in the cytoplasm. The catalysed reaction is dTTP + H2O = dTMP + diphosphate + H(+). It carries out the reaction UTP + H2O = UMP + diphosphate + H(+). In terms of biological role, nucleoside triphosphate pyrophosphatase that hydrolyzes dTTP and UTP. May have a dual role in cell division arrest and in preventing the incorporation of modified nucleotides into cellular nucleic acids. In Pseudomonas syringae pv. syringae (strain B728a), this protein is dTTP/UTP pyrophosphatase.